We begin with the raw amino-acid sequence, 329 residues long: Peroxidase 5 (329 aa).

A signal peptide spans 1–26 (MSSKRVTWLSLTWVLVFLCLSVELEA). Glutamine 27 carries the post-translational modification Pyrrolidone carboxylic acid. Disulfide bonds link cysteine 37-cysteine 117, cysteine 70-cysteine 75, cysteine 123-cysteine 324, and cysteine 202-cysteine 234. Catalysis depends on histidine 68, which acts as the Proton acceptor. Ca(2+)-binding residues include aspartate 69, valine 72, glycine 74, aspartate 76, and serine 78. Proline 165 serves as a coordination point for substrate. A heme b-binding site is contributed by histidine 195. Threonine 196 contacts Ca(2+). N-linked (GlcNAc...) asparagine glycosylation is present at asparagine 213. Positions 251 and 256 each coordinate Ca(2+).

It belongs to the peroxidase family. Classical plant (class III) peroxidase subfamily. The cofactor is heme b. Requires Ca(2+) as cofactor.

Its subcellular location is the secreted. The catalysed reaction is 2 a phenolic donor + H2O2 = 2 a phenolic radical donor + 2 H2O. In terms of biological role, removal of H(2)O(2), oxidation of toxic reductants, biosynthesis and degradation of lignin, suberization, auxin catabolism, response to environmental stresses such as wounding, pathogen attack and oxidative stress. These functions might be dependent on each isozyme/isoform in each plant tissue. The chain is Peroxidase 5 from Vitis vinifera (Grape).